The following is a 393-amino-acid chain: MNVPATRKDLMIVNMGPHHPSMHGVLRLIVTLDGEDVIDCEPVLGYLHRGMEKIAENRTIIQYLPYVTRWDYLATMFTEAITVNAPEQLGNIQVPKRASYIRVIMLELSRIASHLLWLGPFMADIGAQTPFFYIFRERELLYDLFEAATGMRMMHNYFRIGGVAADLPHGWIDKCLDFCDYFLTGVVEYQKLITRNPIFLERVEGVGIIGGEEAINWGLSGPMLRASGIQWDLRKVDHYECYDEFDWQVQWQKEGDSLARYLVRISEMTESIKILQQALEGIPGGPYENLEGRRFDRESDSEWNDFDYRFISKKPSPTFELSKQELYVRVEAPKGELGIFLIGDNSVFPWRWKIRPPGFINLQILPHLVKRMKLADIMTILGSIDIIMGEVDR.

The protein belongs to the complex I 49 kDa subunit family. In terms of assembly, NDH is composed of at least 16 different subunits, 5 of which are encoded in the nucleus.

Its subcellular location is the plastid. It is found in the chloroplast thylakoid membrane. It catalyses the reaction a plastoquinone + NADH + (n+1) H(+)(in) = a plastoquinol + NAD(+) + n H(+)(out). The catalysed reaction is a plastoquinone + NADPH + (n+1) H(+)(in) = a plastoquinol + NADP(+) + n H(+)(out). In terms of biological role, NDH shuttles electrons from NAD(P)H:plastoquinone, via FMN and iron-sulfur (Fe-S) centers, to quinones in the photosynthetic chain and possibly in a chloroplast respiratory chain. The immediate electron acceptor for the enzyme in this species is believed to be plastoquinone. Couples the redox reaction to proton translocation, and thus conserves the redox energy in a proton gradient. The sequence is that of NAD(P)H-quinone oxidoreductase subunit H, chloroplastic from Calycanthus floridus var. glaucus (Eastern sweetshrub).